The following is a 403-amino-acid chain: Tryptophan synthase beta chain 1 (403 aa).

Position 96 is an N6-(pyridoxal phosphate)lysine (Lys-96).

The protein belongs to the TrpB family. In terms of assembly, tetramer of two alpha and two beta chains. The cofactor is pyridoxal 5'-phosphate.

It carries out the reaction (1S,2R)-1-C-(indol-3-yl)glycerol 3-phosphate + L-serine = D-glyceraldehyde 3-phosphate + L-tryptophan + H2O. It participates in amino-acid biosynthesis; L-tryptophan biosynthesis; L-tryptophan from chorismate: step 5/5. In terms of biological role, the beta subunit is responsible for the synthesis of L-tryptophan from indole and L-serine. This chain is Tryptophan synthase beta chain 1 (trpB1), found in Wolinella succinogenes (strain ATCC 29543 / DSM 1740 / CCUG 13145 / JCM 31913 / LMG 7466 / NCTC 11488 / FDC 602W) (Vibrio succinogenes).